Reading from the N-terminus, the 501-residue chain is Lysine--tRNA ligase (501 aa).

2 residues coordinate Mg(2+): Glu402 and Glu409.

It belongs to the class-II aminoacyl-tRNA synthetase family. In terms of assembly, homodimer. Mg(2+) serves as cofactor.

Its subcellular location is the cytoplasm. The catalysed reaction is tRNA(Lys) + L-lysine + ATP = L-lysyl-tRNA(Lys) + AMP + diphosphate. This chain is Lysine--tRNA ligase, found in Helicobacter pylori (strain G27).